Consider the following 206-residue polypeptide: Small ribosomal subunit protein uS4 (206 aa).

The interval 27-47 is disordered; the sequence is PSESKCNMNAAPGQHGGRRGR. The S4 RNA-binding domain maps to 96-158; sequence QRLDNVVYRM…SRKQIRIQSA (63 aa).

It belongs to the universal ribosomal protein uS4 family. Part of the 30S ribosomal subunit. Contacts protein S5. The interaction surface between S4 and S5 is involved in control of translational fidelity.

One of the primary rRNA binding proteins, it binds directly to 16S rRNA where it nucleates assembly of the body of the 30S subunit. In terms of biological role, with S5 and S12 plays an important role in translational accuracy. This Dichelobacter nodosus (strain VCS1703A) protein is Small ribosomal subunit protein uS4.